A 715-amino-acid polypeptide reads, in one-letter code: NADH-ubiquinone oxidoreductase chain 5 (715 aa).

17 helical membrane passes run 1 to 21 (MYLS…FFGR), 30 to 50 (LITC…FFEV), 81 to 101 (LTVA…IYSI), 119 to 139 (LFTF…MFVG), 140 to 160 (WEGV…RIAA), 177 to 197 (FLTI…YATV), 200 to 220 (LAPY…LIGA), 241 to 261 (TPVS…YLLM), 274 to 294 (LLLC…IGLF), 310 to 330 (LGMM…FHLI), 331 to 351 (NHAF…HAVA), 366 to 386 (LPLT…FPYM), 403 to 423 (FSFS…FTTL), 487 to 507 (GFFL…FGFI), 543 to 563 (TLFK…ALVL), 647 to 667 (IVTN…FTFI), and 668 to 688 (SLLE…LSLT).

It belongs to the complex I subunit 5 family.

The protein resides in the mitochondrion inner membrane. The enzyme catalyses a ubiquinone + NADH + 5 H(+)(in) = a ubiquinol + NAD(+) + 4 H(+)(out). Core subunit of the mitochondrial membrane respiratory chain NADH dehydrogenase (Complex I) that is believed to belong to the minimal assembly required for catalysis. Complex I functions in the transfer of electrons from NADH to the respiratory chain. The immediate electron acceptor for the enzyme is believed to be ubiquinone. The polypeptide is NADH-ubiquinone oxidoreductase chain 5 (ndh-5) (Neurospora crassa (strain ATCC 24698 / 74-OR23-1A / CBS 708.71 / DSM 1257 / FGSC 987)).